Consider the following 119-residue polypeptide: Large ribosomal subunit protein bL20 (119 aa).

This sequence belongs to the bacterial ribosomal protein bL20 family.

In terms of biological role, binds directly to 23S ribosomal RNA and is necessary for the in vitro assembly process of the 50S ribosomal subunit. It is not involved in the protein synthesizing functions of that subunit. This is Large ribosomal subunit protein bL20 from Halalkalibacterium halodurans (strain ATCC BAA-125 / DSM 18197 / FERM 7344 / JCM 9153 / C-125) (Bacillus halodurans).